Here is a 151-residue protein sequence, read N- to C-terminus: Large ribosomal subunit protein bL28c (151 aa).

The N-terminal 74 residues, 1 to 74, are a transit peptide targeting the chloroplast; the sequence is MATMVAGISL…PFKPSLQPVA (74 aa).

It belongs to the bacterial ribosomal protein bL28 family. In terms of assembly, part of the 50S ribosomal subunit.

It localises to the plastid. It is found in the chloroplast. This chain is Large ribosomal subunit protein bL28c (RPL28), found in Nicotiana tabacum (Common tobacco).